The sequence spans 272 residues: Phosphoglycolate phosphatase (272 aa).

Aspartate 19 (nucleophile) is an active-site residue. 3 residues coordinate Mg(2+): aspartate 19, aspartate 21, and aspartate 182.

Belongs to the HAD-like hydrolase superfamily. CbbY/CbbZ/Gph/YieH family. Mg(2+) serves as cofactor.

The enzyme catalyses 2-phosphoglycolate + H2O = glycolate + phosphate. The protein operates within organic acid metabolism; glycolate biosynthesis; glycolate from 2-phosphoglycolate: step 1/1. Functionally, specifically catalyzes the dephosphorylation of 2-phosphoglycolate. Is involved in the dissimilation of the intracellular 2-phosphoglycolate formed during the DNA repair of 3'-phosphoglycolate ends, a major class of DNA lesions induced by oxidative stress. The protein is Phosphoglycolate phosphatase of Pseudomonas syringae pv. syringae (strain B728a).